Consider the following 203-residue polypeptide: Cbp/p300-interacting transactivator 1 (203 aa).

Disordered stretches follow at residues 1-24 (MPTMSRPALDVKGGTTSGKEDANQ) and 51-86 (TANGAKANGVPTSSSGSTSPIGSPTATPSSKPPSFN). Residues 61-84 (PTSSSGSTSPIGSPTATPSSKPPS) are compositionally biased toward low complexity. Residues 168–177 (LMSLVVELGL) carry the Nuclear export signal motif.

It belongs to the CITED family. Homodimer. Binds to RBM14. Interacts (via N-terminus) with HSPA8; the interaction suppresses the association of CITED1 with p300/CBP and SMAD-mediated transcription transactivation. Interacts (via C-terminus) with TOX3 (via HGM box); the interaction increases estrogen-response element (ERE)-dependent transcription and protection against cell death. Interacts with ESR1; the interaction occurs in a estrogen-dependent manner. Interacts (unphosphorylated form preferentially and via C-terminus) with EP300. Interacts (via C-terminus) with CREBBP. Interacts with EGR2. Phosphorylated. Phosphorylation changes in a cell cycle-dependent manner and reduces its transcriptional cofactor activity. As to expression, expressed in calvarial osteoblasts. Expressed in nulliparous mammary epithelial cells; absent in pregnant mice and in lacting mammary glands. Also expressed in mammary tumors (at protein level). Expressed only in melanocytes and testis. Expressed at high levels in the strongly pigmented melanoma cells but at low levels in the weakly pigmented cells.

It localises to the nucleus. It is found in the cytoplasm. Transcriptional coactivator of the p300/CBP-mediated transcription complex. Enhances SMAD-mediated transcription by strengthening the functional link between the DNA-binding SMAD transcription factors and the p300/CBP transcription coactivator complex. Stimulates estrogen-dependent transactivation activity mediated by estrogen receptors signaling; stabilizes the interaction of estrogen receptor ESR1 and histone acetyltransferase EP300. Positively regulates TGF-beta signaling through its association with the SMAD/p300/CBP-mediated transcriptional coactivator complex. Induces transcription from estrogen-responsive promoters and protection against cell death. Potentiates EGR2-mediated transcriptional activation activity from the ERBB2 promoter. Acts as an inhibitor of osteoblastic mineralization through a cAMP-dependent parathyroid hormone receptor signaling. May play a role in pigmentation of melanocytes. Associates with chromatin to the estrogen-responsive TGF-alpha promoter region in a estrogen-dependent manner. The chain is Cbp/p300-interacting transactivator 1 (Cited1) from Mus musculus (Mouse).